Reading from the N-terminus, the 299-residue chain is ATP phosphoribosyltransferase (299 aa).

This sequence belongs to the ATP phosphoribosyltransferase family. Long subfamily. As to quaternary structure, equilibrium between an active dimeric form, an inactive hexameric form and higher aggregates. Interconversion between the various forms is largely reversible and is influenced by the natural substrates and inhibitors of the enzyme. Mg(2+) serves as cofactor.

The protein localises to the cytoplasm. It carries out the reaction 1-(5-phospho-beta-D-ribosyl)-ATP + diphosphate = 5-phospho-alpha-D-ribose 1-diphosphate + ATP. Its pathway is amino-acid biosynthesis; L-histidine biosynthesis; L-histidine from 5-phospho-alpha-D-ribose 1-diphosphate: step 1/9. Its activity is regulated as follows. Feedback inhibited by histidine. Functionally, catalyzes the condensation of ATP and 5-phosphoribose 1-diphosphate to form N'-(5'-phosphoribosyl)-ATP (PR-ATP). Has a crucial role in the pathway because the rate of histidine biosynthesis seems to be controlled primarily by regulation of HisG enzymatic activity. The sequence is that of ATP phosphoribosyltransferase from Escherichia coli O8 (strain IAI1).